The primary structure comprises 137 residues: F420H(2)-dependent biliverdin reductase (137 aa).

Coenzyme F420-(gamma-Glu)n contacts are provided by residues 36-41 (HVVAVG), 54-55 (IT), 60-61 (QK), Arg-67, and 78-81 (GARW).

It belongs to the F420H(2)-dependent biliverdin reductase family. Homodimer.

The protein resides in the cell surface. Its subcellular location is the secreted. It catalyses the reaction (4Z,15Z)-bilirubin IXalpha + oxidized coenzyme F420-(gamma-L-Glu)(n) + H(+) = biliverdin IXalpha + reduced coenzyme F420-(gamma-L-Glu)(n). Catalyzes the F420H(2)-dependent reduction of biliverdin-IXalpha at C10 position, leading to bilirubin-IXalpha, a potent antioxidant. As biliverdin-IXalpha is produced in high amounts in macrophages infected with M.tuberculosis, its reduction by Rv2074 may play a role in protecting mycobacteria against oxidative stress, aiding the persistence of M.tuberculosis infection. This is F420H(2)-dependent biliverdin reductase from Mycobacterium tuberculosis (strain CDC 1551 / Oshkosh).